The following is a 529-amino-acid chain: Peptide chain release factor 3 (529 aa).

A tr-type G domain is found at 11–280; the sequence is AKRRTFAIIS…GLVAWAPAPM (270 aa). GTP contacts are provided by residues 20-27, 88-92, and 142-145; these read SHPDAGKT, DTPGH, and NKLD.

It belongs to the TRAFAC class translation factor GTPase superfamily. Classic translation factor GTPase family. PrfC subfamily.

Its subcellular location is the cytoplasm. In terms of biological role, increases the formation of ribosomal termination complexes and stimulates activities of RF-1 and RF-2. It binds guanine nucleotides and has strong preference for UGA stop codons. It may interact directly with the ribosome. The stimulation of RF-1 and RF-2 is significantly reduced by GTP and GDP, but not by GMP. This is Peptide chain release factor 3 from Salmonella agona (strain SL483).